The sequence spans 185 residues: Small ribosomal subunit protein uS4 (185 aa).

The S4 RNA-binding domain occupies Arg-107–His-179. The segment at Asn-161–Asn-185 is disordered.

Belongs to the universal ribosomal protein uS4 family.

The polypeptide is Small ribosomal subunit protein uS4 (Entamoeba histolytica (strain ATCC 30459 / HM-1:IMSS / ABRM)).